The chain runs to 200 residues: Eukaryotic translation initiation factor isoform 4E (200 aa).

Residues 1 to 22 (MATEAPIEATEVPPASATETVA) form a disordered region. MRNA is bound by residues 44–49 (QGAAWG), lysine 76, and 94–95 (WE). Residues cysteine 99 and cysteine 138 are joined by a disulfide bond. Residues 145 to 150 (RRSQDK) and 189 to 192 (KRER) each bind mRNA.

It belongs to the eukaryotic initiation factor 4E family. EIF4F is a multi-subunit complex, the composition of which varies with external and internal environmental conditions. It is composed of at least EIF4A, EIF4E and EIF4G. EIF4E is also known to interact with other partners. In higher plants two isoforms of EIF4F have been identified, named isoform EIF4F and isoform EIF(iso)4F. Isoform EIF4F has subunits p220 and p26, whereas isoform EIF(iso)4F has subunits p82 and p28. As to quaternary structure, (Microbial infection) Interacts with viral genome-linked protein (VPg); this interaction is possible in susceptible hosts but impaired in resistant plants. In terms of processing, according to the redox status, the Cys-99-Cys-138 disulfide bridge may have a role in regulating protein function by affecting its ability to bind capped mRNA. As to expression, expressed ubiquitously in seedlings, roots, leaves, sepals, petals, anthers and dehisced pollen, with highest levels in pollen, maturing anthers and roots. Strongly expressed in susceptible plants but not in resistant ones.

It localises to the cytoplasm. Its subcellular location is the nucleus. Functionally, component of the protein complex eIF4F, which is involved in the recognition of the mRNA cap, ATP-dependent unwinding of 5'-terminal secondary structure and recruitment of mRNA to the ribosome. Recognizes and binds the 7-methylguanosine-containing mRNA cap during an early step in the initiation of protein synthesis and facilitates ribosome binding by inducing the unwinding of the mRNAs secondary structures. Key component of recessive resistance to potyviruses. (Microbial infection) Susceptibility host factor required for viral infection (e.g. potato virus Y (PVY) and pepper mottle virus (PepMoV)) by recruiting viral RNAs to the host ribosomal complex via an interaction with viral genome-linked protein (VPg). The polypeptide is Eukaryotic translation initiation factor isoform 4E (Nicotiana tabacum (Common tobacco)).